A 338-amino-acid chain; its full sequence is MNTEATHDQNEALTTGVRLRNAREQLGLSQQAVAERLCLKVSTVRDIEEDKAPADLASTFLRGYIRSYARLVHIPEEELLPGLEKQAPLRAAKVAPMQSFSLGKRRKKRDGWLMTFTWLVLFVVIGLSGAWWWQDHKAQQEEITTMADQSSAELNANGTNSQSIPLENSTTTVPEATPAPAAPVDTTANEQTPAASTPAPVTEPQQNAVVPPSQANVDTATTAPAAPATTTTPDTATPLPTDQAGVTTPAADPNALVMNFTADCWLEVTDATGKKLFSGMQRKDGNLNLTGQAPYKLKIGAPAAVQIQYQGKPVDLSRFIRTNQVARLTLNAEQSPAQ.

Residues Met1 to Gly111 are Cytoplasmic-facing. Residues Leu19–Leu71 enclose the HTH cro/C1-type domain. The H-T-H motif DNA-binding region spans Gln30–Glu49. The chain crosses the membrane as a helical; Signal-anchor for type II membrane protein span at residues Trp112–Trp132. Over Trp133–Gln338 the chain is Periplasmic. The segment covering Asn155 to Ser169 has biased composition (polar residues). The disordered stretch occupies residues Asn155–Pro240. The span at Thr170–Ala188 shows a compositional bias: low complexity. Residues Glu203 to Val217 are compositionally biased toward polar residues. Positions Asp218–Pro240 are enriched in low complexity.

This sequence belongs to the RodZ family.

It is found in the cell inner membrane. Cytoskeletal protein that is involved in cell-shape control through regulation of the length of the long axis. The chain is Cytoskeleton protein RodZ from Escherichia fergusonii (strain ATCC 35469 / DSM 13698 / CCUG 18766 / IAM 14443 / JCM 21226 / LMG 7866 / NBRC 102419 / NCTC 12128 / CDC 0568-73).